The sequence spans 635 residues: MINISFPDGSVRQFENDITAYEVANAISMSLAKAAMVAEINGELKDLSTVIENDCKLRILTAKDSECLEIIRHDAAHIIAEAAKELFPDIQVTIGPAIENGFFYDFAKDKPFTPDDVAMIEARMHEIVKRNEQITRELWNRDKAIEFFKSIGEHYKAEIIASIPAGEQITLYRQGNFIDLCRGPHAPSTGFVKHFKLMKVAGAYWRGDSRNEMLQRIYGTAWATKEQLDNYLLMLEEAEKRDHRKLGKELDLFHFQEEAQGMVFWHDKGWSIYNTIEQYIRKKIRKNGYTEVKTPVLVDKSLWEASGHWEKFRDDMFALDTDDKTLALKPMNCPCHVQIFKQGIKSYRDLPLRMSEFGLCHRNEASGALHGLMRVRSLVQDDAHIFCTEEQITDETVSFCKLLTEVYKDFGFTNISVKFSDRPEVRAGSNGTWDKAENALKEAVEKAGFTYTLNPGEGAFYGPKLEFVLTDAIGRQWQCGTLQMDFVLPERLDASYIAASGEKKRPVMLHRAILGSLERFIGILIEEYAGCFPLWLAPIQVAIATITSDLNDYALEVQKALIDNGVRTDINISPDKINYKIREFYNQKIPMIAVIGKQEQENKQVTIRRLRTTEQEVLSLEQLITLIKEENEKYL.

The 61-residue stretch at 1-61 (MINISFPDGS…ENDCKLRILT (61 aa)) folds into the TGS domain. Positions 242 to 533 (DHRKLGKELD…LIEEYAGCFP (292 aa)) are catalytic. Zn(2+) is bound by residues Cys-333, His-384, and His-510.

The protein belongs to the class-II aminoacyl-tRNA synthetase family. As to quaternary structure, homodimer. Requires Zn(2+) as cofactor.

It is found in the cytoplasm. It catalyses the reaction tRNA(Thr) + L-threonine + ATP = L-threonyl-tRNA(Thr) + AMP + diphosphate + H(+). Its function is as follows. Catalyzes the attachment of threonine to tRNA(Thr) in a two-step reaction: L-threonine is first activated by ATP to form Thr-AMP and then transferred to the acceptor end of tRNA(Thr). Also edits incorrectly charged L-seryl-tRNA(Thr). The sequence is that of Threonine--tRNA ligase from Rickettsia akari (strain Hartford).